A 131-amino-acid polypeptide reads, in one-letter code: Profilin-A (131 aa).

This sequence belongs to the profilin family. In terms of assembly, occurs in many kinds of cells as a complex with monomeric actin in a 1:1 ratio.

Its subcellular location is the cytoplasm. The protein localises to the cytoskeleton. Binds to actin and affects the structure of the cytoskeleton. At high concentrations, profilin prevents the polymerization of actin, whereas it enhances it at low concentrations. By binding to PIP2, it inhibits the formation of IP3 and DG. May serve as a modulator in pollen germination and pollen tube growth. This chain is Profilin-A, found in Oryza sativa subsp. japonica (Rice).